A 96-amino-acid chain; its full sequence is Antitoxin ParD4 (96 aa).

It belongs to the ParD antitoxin family.

Its function is as follows. Antitoxin component of a type II toxin-antitoxin (TA) system. Neutralizes the effect of cognate toxin ParE4, but no other RelE or ParE toxin. This is Antitoxin ParD4 (parD4) from Caulobacter vibrioides (strain ATCC 19089 / CIP 103742 / CB 15) (Caulobacter crescentus).